The chain runs to 127 residues: Cytochrome c2 (127 aa).

Residues methionine 1 to alanine 20 form the signal peptide. Pyrrolidone carboxylic acid is present on glutamine 21. Cysteine 33, cysteine 36, histidine 37, and methionine 99 together coordinate heme c.

The protein belongs to the cytochrome c family. Post-translationally, binds 1 heme c group covalently per subunit.

In terms of biological role, cytochrome c2 is found mainly in purple, non-sulfur, photosynthetic bacteria where it functions as the electron donor to the oxidized bacteriochlorophyll in the photophosphorylation pathway. However, it may also have a role in the respiratory chain and is found in some non-photosynthetic bacteria. This Blastochloris viridis (Rhodopseudomonas viridis) protein is Cytochrome c2 (cycA).